The primary structure comprises 210 residues: Nucleoside triphosphate pyrophosphatase (210 aa).

The active-site Proton acceptor is Asp79.

This sequence belongs to the Maf family. Requires a divalent metal cation as cofactor.

Its subcellular location is the cytoplasm. It catalyses the reaction a ribonucleoside 5'-triphosphate + H2O = a ribonucleoside 5'-phosphate + diphosphate + H(+). The enzyme catalyses a 2'-deoxyribonucleoside 5'-triphosphate + H2O = a 2'-deoxyribonucleoside 5'-phosphate + diphosphate + H(+). Its function is as follows. Nucleoside triphosphate pyrophosphatase. May have a dual role in cell division arrest and in preventing the incorporation of modified nucleotides into cellular nucleic acids. This is Nucleoside triphosphate pyrophosphatase from Mycolicibacterium paratuberculosis (strain ATCC BAA-968 / K-10) (Mycobacterium paratuberculosis).